We begin with the raw amino-acid sequence, 151 residues long: Neuroglobin (151 aa).

Residues 1-149 enclose the Globin domain; sequence MELPEPELIR…VVQAMSRGWG (149 aa). 2 residues coordinate heme b: H64 and H96.

The protein belongs to the globin family. As to quaternary structure, monomer. Homodimer and homotetramer; disulfide-linked. Mainly monomeric but also detected as part of homodimers and homotetramers. Interacts with 14-3-3 proteins; regulates the phosphorylation of NGB. Could interact (ferrous form) with G-alpha(i) proteins (GTP-bound form). In terms of processing, phosphorylated during hypoxia by ERK1/ERK2. Phosphorylation regulates the heme pocket hexacoordination preventing the association of His-64 with the heme metal center. Thereby, promotes the access of dioxygen and nitrite to the heme and stimulates the nitrite reductase activity. Phosphorylation during hypoxia is stabilized by 14-3-3 proteins.

The protein localises to the cytoplasm. Its subcellular location is the cytosol. It localises to the mitochondrion matrix. It carries out the reaction Fe(III)-heme b-[protein] + nitric oxide + H2O = Fe(II)-heme b-[protein] + nitrite + 2 H(+). Functionally, monomeric globin with a bis-histidyl six-coordinate heme-iron atom through which it can bind dioxygen, carbon monoxide and nitric oxide. Could help transport oxygen and increase its availability to the metabolically active neuronal tissues, though its low quantity in tissues as well as its high affinity for dioxygen, which may limit its oxygen-releasing ability, argue against it. The ferrous/deoxygenated form exhibits a nitrite reductase activity and it could produce nitric oxide which in turn inhibits cellular respiration in response to hypoxia. In its ferrous/deoxygenated state, it may also exhibit GDI (Guanine nucleotide Dissociation Inhibitor) activity toward heterotrimeric G-alpha proteins, thereby regulating signal transduction to facilitate neuroprotective responses in the wake of hypoxia and associated oxidative stress. This chain is Neuroglobin, found in Bos taurus (Bovine).